The primary structure comprises 872 residues: Homeobox-leucine zipper protein ROC6 (872 aa).

Disordered regions lie at residues 28–53 (VHNS…GLSL) and 67–130 (NRSL…HRHT). The span at 74-85 (GNGGSGSGGDGD) shows a compositional bias: gly residues. The span at 86-99 (SLGRGREEENDSRS) shows a compositional bias: basic and acidic residues. The span at 119–130 (PRKKKKRYHRHT) shows a compositional bias: basic residues. The segment at residues 122-181 (KKKRYHRHTPQQIQELEAVFKECPHPDEKQRMELSRRLNLESRQVKFWFQNRRTQMKQTQ) is a DNA-binding region (homeobox). Positions 176–248 (QMKQTQIERH…LKDELDRVCA (73 aa)) form a coiled coil. The START domain occupies 340-583 (GAIDRAVLLE…LQRQCQYLAI (244 aa)). The segment at 792–818 (HNNGASPSPAEVGSGASPNSAAGGGGG) is disordered.

Belongs to the HD-ZIP homeobox family. Class IV subfamily.

Its subcellular location is the nucleus. Its function is as follows. Probable transcription factor. The protein is Homeobox-leucine zipper protein ROC6 (ROC6) of Oryza sativa subsp. japonica (Rice).